The primary structure comprises 433 residues: Tol-Pal system protein TolB (433 aa).

The N-terminal stretch at 1–26 is a signal peptide; that stretch reads MSLMTKLGFRALVASCLIAAGGAAHA.

Belongs to the TolB family. The Tol-Pal system is composed of five core proteins: the inner membrane proteins TolA, TolQ and TolR, the periplasmic protein TolB and the outer membrane protein Pal. They form a network linking the inner and outer membranes and the peptidoglycan layer.

It localises to the periplasm. Its function is as follows. Part of the Tol-Pal system, which plays a role in outer membrane invagination during cell division and is important for maintaining outer membrane integrity. The protein is Tol-Pal system protein TolB of Burkholderia pseudomallei (strain 1710b).